Reading from the N-terminus, the 313-residue chain is Tyrosine recombinase slr0733 (313 aa).

Residues 7–101 enclose the Core-binding (CB) domain; that stretch reads NNLSGLNQNI…AIKSLVNYAR (95 aa). A Tyr recombinase domain is found at 122–307; that stretch reads RDTTGVSPTS…RHQHQAQITD (186 aa). Residues Arg-162, Lys-188, His-258, Arg-261, and His-285 contribute to the active site. Tyr-294 serves as the catalytic O-(3'-phospho-DNA)-tyrosine intermediate.

This sequence belongs to the 'phage' integrase family.

The protein localises to the cytoplasm. Functionally, site-specific tyrosine recombinase, which acts by catalyzing the cutting and rejoining of the recombining DNA molecules. The sequence is that of Tyrosine recombinase slr0733 from Synechocystis sp. (strain ATCC 27184 / PCC 6803 / Kazusa).